We begin with the raw amino-acid sequence, 397 residues long: ATP-dependent RNA helicase eIF4A (397 aa).

A Q motif motif is present at residues 23–51 (YTFDDLNLKPNIVRGIFGYGYESPSAIQQ). The region spanning 54–224 (ILPITEGRDV…TKFMNNPVRI (171 aa)) is the Helicase ATP-binding domain. ATP is bound at residue 67–74 (AQSGTGKT). The DEAD box signature appears at 172–175 (DEAD). Positions 235-396 (GIKQFYINVE…EMPADIGALF (162 aa)) constitute a Helicase C-terminal domain.

Belongs to the DEAD box helicase family. eIF4A subfamily. Component of the eIF4F complex, which composition varies with external and internal environmental conditions. It is composed of at least eIF4A, eIF4E and eIF4G.

It is found in the cytoplasm. It carries out the reaction ATP + H2O = ADP + phosphate + H(+). ATP-dependent RNA helicase which is a subunit of the eIF4F complex involved in cap recognition and is required for mRNA binding to ribosome. In the current model of translation initiation, eIF4A unwinds RNA secondary structures in the 5'-UTR of mRNAs which is necessary to allow efficient binding of the small ribosomal subunit, and subsequent scanning for the initiator codon. The protein is ATP-dependent RNA helicase eIF4A (TIF1) of Debaryomyces hansenii (strain ATCC 36239 / CBS 767 / BCRC 21394 / JCM 1990 / NBRC 0083 / IGC 2968) (Yeast).